The following is a 476-amino-acid chain: NADH-quinone oxidoreductase subunit N (476 aa).

14 consecutive transmembrane segments (helical) span residues isoleucine 8–valine 28, glycine 35–tryptophan 55, tyrosine 71–phenylalanine 91, phenylalanine 102–glycine 122, phenylalanine 124–phenylalanine 144, isoleucine 159–alanine 179, leucine 201–phenylalanine 221, phenylalanine 239–glycine 259, tryptophan 267–isoleucine 287, methionine 295–threonine 315, valine 322–isoleucine 342, alanine 366–valine 386, leucine 405–phenylalanine 425, and valine 437–isoleucine 457.

This sequence belongs to the complex I subunit 2 family. In terms of assembly, NDH-1 is composed of 14 different subunits. Subunits NuoA, H, J, K, L, M, N constitute the membrane sector of the complex.

The protein localises to the cell membrane. It catalyses the reaction a quinone + NADH + 5 H(+)(in) = a quinol + NAD(+) + 4 H(+)(out). In terms of biological role, NDH-1 shuttles electrons from NADH, via FMN and iron-sulfur (Fe-S) centers, to quinones in the respiratory chain. The immediate electron acceptor for the enzyme in this species is believed to be a menaquinone. Couples the redox reaction to proton translocation (for every two electrons transferred, four hydrogen ions are translocated across the cytoplasmic membrane), and thus conserves the redox energy in a proton gradient. The protein is NADH-quinone oxidoreductase subunit N of Desulforamulus reducens (strain ATCC BAA-1160 / DSM 100696 / MI-1) (Desulfotomaculum reducens).